Reading from the N-terminus, the 217-residue chain is Uracil-DNA glycosylase (217 aa).

The active-site Proton acceptor is the D62.

This sequence belongs to the uracil-DNA glycosylase (UDG) superfamily. UNG family.

Its subcellular location is the cytoplasm. It catalyses the reaction Hydrolyzes single-stranded DNA or mismatched double-stranded DNA and polynucleotides, releasing free uracil.. In terms of biological role, excises uracil residues from the DNA which can arise as a result of misincorporation of dUMP residues by DNA polymerase or due to deamination of cytosine. This Streptococcus mutans serotype c (strain ATCC 700610 / UA159) protein is Uracil-DNA glycosylase.